A 436-amino-acid polypeptide reads, in one-letter code: 3-ketoacyl-CoA thiolase (436 aa).

Cys99 acts as the Acyl-thioester intermediate in catalysis. Active-site proton acceptor residues include His392 and Cys422.

Belongs to the thiolase-like superfamily. Thiolase family. As to quaternary structure, heterotetramer of two alpha chains (FadJ) and two beta chains (FadI).

The protein resides in the cytoplasm. It carries out the reaction an acyl-CoA + acetyl-CoA = a 3-oxoacyl-CoA + CoA. It participates in lipid metabolism; fatty acid beta-oxidation. In terms of biological role, catalyzes the final step of fatty acid oxidation in which acetyl-CoA is released and the CoA ester of a fatty acid two carbons shorter is formed. The sequence is that of 3-ketoacyl-CoA thiolase from Shewanella frigidimarina (strain NCIMB 400).